Consider the following 643-residue polypeptide: Phosphomethylpyrimidine synthase (643 aa).

Substrate-binding positions include N248, M277, Y306, H342, 362–364, 403–406, and E442; these read SRG and DGLR. H446 lines the Zn(2+) pocket. Y469 lines the substrate pocket. H510 contributes to the Zn(2+) binding site. [4Fe-4S] cluster is bound by residues C590, C593, and C598.

Belongs to the ThiC family. Homodimer. Requires [4Fe-4S] cluster as cofactor.

The enzyme catalyses 5-amino-1-(5-phospho-beta-D-ribosyl)imidazole + S-adenosyl-L-methionine = 4-amino-2-methyl-5-(phosphooxymethyl)pyrimidine + CO + 5'-deoxyadenosine + formate + L-methionine + 3 H(+). The protein operates within cofactor biosynthesis; thiamine diphosphate biosynthesis. Its function is as follows. Catalyzes the synthesis of the hydroxymethylpyrimidine phosphate (HMP-P) moiety of thiamine from aminoimidazole ribotide (AIR) in a radical S-adenosyl-L-methionine (SAM)-dependent reaction. The chain is Phosphomethylpyrimidine synthase from Burkholderia ambifaria (strain ATCC BAA-244 / DSM 16087 / CCUG 44356 / LMG 19182 / AMMD) (Burkholderia cepacia (strain AMMD)).